The sequence spans 505 residues: Lysine--tRNA ligase, heat inducible (505 aa).

An N6-acetyllysine mark is found at Lys-114 and Lys-156. Mg(2+)-binding residues include Glu-415 and Glu-422.

Belongs to the class-II aminoacyl-tRNA synthetase family. As to quaternary structure, homodimer. The cofactor is Mg(2+).

It is found in the cytoplasm. It carries out the reaction tRNA(Lys) + L-lysine + ATP = L-lysyl-tRNA(Lys) + AMP + diphosphate. In Escherichia coli O157:H7, this protein is Lysine--tRNA ligase, heat inducible (lysU).